The following is a 299-amino-acid chain: Meso-diaminopimelate D-dehydrogenase (299 aa).

NADP(+) contacts are provided by residues 11-14, Arg-36, 67-70, 90-92, and 119-123; these read YGNI, CTPT, SFD, and AGWDP. Residues Asp-92, Asp-122, Phe-146, 152–153, Thr-171, Arg-181, His-227, and Asn-253 contribute to the substrate site; that span reads MG.

It belongs to the diaminopimelate dehydrogenase family. As to quaternary structure, homodimer.

It carries out the reaction meso-2,6-diaminopimelate + NADP(+) + H2O = (S)-2-amino-6-oxoheptanedioate + NH4(+) + NADPH + H(+). It functions in the pathway amino-acid biosynthesis; L-lysine biosynthesis via DAP pathway; DL-2,6-diaminopimelate from (S)-tetrahydrodipicolinate: step 1/1. Its function is as follows. Catalyzes the reversible NADPH-dependent reductive amination of L-2-amino-6-oxopimelate, the acyclic form of L-tetrahydrodipicolinate, to generate the meso compound, D,L-2,6-diaminopimelate. Probably plays a role in lysine biosynthesis. Exhibits a high substrate specificity for meso-2,6-diaminopimelate (m-DAP), since the activity with L,L-2,6-diaminopimelate is less than 5% of the activity observed with m-DAP. Can use NAD(+) only very poorly since the activity observed in the presence of NAD(+) is about 14% of that with NADP(+). The polypeptide is Meso-diaminopimelate D-dehydrogenase (ddh) (Bacteroides fragilis (strain ATCC 25285 / DSM 2151 / CCUG 4856 / JCM 11019 / LMG 10263 / NCTC 9343 / Onslow / VPI 2553 / EN-2)).